We begin with the raw amino-acid sequence, 120 residues long: Alpha-amylase inhibitor Haim-2 (120 aa).

An N-terminal signal peptide occupies residues 1–32 (MKRYVCSTFVACVMVLCVIPASGAAAHEAVAE). Intrachain disulfides connect Cys-43–Cys-59 and Cys-77–Cys-104.

In terms of biological role, inhibits mammalian alpha-amylases specifically but has no action on plant and microbial alpha-amylases. The chain is Alpha-amylase inhibitor Haim-2 from Streptomyces griseosporeus.